Consider the following 361-residue polypeptide: Nicotinate-nucleotide--dimethylbenzimidazole phosphoribosyltransferase (361 aa).

Catalysis depends on glutamate 315, which acts as the Proton acceptor.

This sequence belongs to the CobT family.

The catalysed reaction is 5,6-dimethylbenzimidazole + nicotinate beta-D-ribonucleotide = alpha-ribazole 5'-phosphate + nicotinate + H(+). The protein operates within nucleoside biosynthesis; alpha-ribazole biosynthesis; alpha-ribazole from 5,6-dimethylbenzimidazole: step 1/2. In terms of biological role, catalyzes the synthesis of alpha-ribazole-5'-phosphate from nicotinate mononucleotide (NAMN) and 5,6-dimethylbenzimidazole (DMB). The polypeptide is Nicotinate-nucleotide--dimethylbenzimidazole phosphoribosyltransferase (Clostridium perfringens (strain 13 / Type A)).